A 439-amino-acid chain; its full sequence is Kinesin-like protein KIN-13 (439 aa).

1–5 (GSGKS) contributes to the ATP binding site. The 240-residue stretch at 1 to 240 (GSGKSFTMMH…LRYADRVKEL (240 aa)) folds into the Kinesin motor domain.

It belongs to the TRAFAC class myosin-kinesin ATPase superfamily. Kinesin family. KIN-13 subfamily. As to quaternary structure, interacts with PLK. Post-translationally, phosphorylated by PLK.

The protein resides in the cytoplasm. It localises to the cytoskeleton. The protein localises to the cell projection. Its subcellular location is the cilium. It is found in the flagellum. The protein resides in the flagellum basal body. It localises to the flagellum axoneme. The protein localises to the spindle. Its subcellular location is the chromosome. It is found in the centromere. The protein resides in the kinetochore. Involved in cell cycle. Involved in formation of flagella, regulation of flagellar length, and formation of median bodies during interphase. Regulates flagellar length in all eight distal flagellar tips by promoting disassembly of the microtubules. Disassembles microtubules at the distal flagellar tips in a length-dependent manner in order to maintain different equilibrium lengths of the four flagellar pairs. Regulates interphase and mitotic microtubule dynamics. Regulates microtubule disassembly dynamics of the dual mitotic spindles and the median body. This Giardia intestinalis (Giardia lamblia) protein is Kinesin-like protein KIN-13.